The sequence spans 112 residues: Nitrogen regulatory protein P-II (112 aa).

Tyrosine 51 bears the O-UMP-tyrosine mark.

It belongs to the P(II) protein family. Homotrimer.

The protein resides in the plastid. The protein localises to the chloroplast. Functionally, P-II indirectly controls the transcription of the glutamine synthetase gene (glnA). P-II prevents NR-II-catalyzed conversion of NR-I to NR-I-phosphate, the transcriptional activator of glnA. When P-II is uridylylated to P-II-UMP, these events are reversed. When the ratio of Gln to 2-ketoglutarate decreases, P-II is uridylylated to P-II-UMP, which causes the deadenylation of glutamine synthetase, so activating the enzyme. This is Nitrogen regulatory protein P-II (glnB) from Porphyra purpurea (Red seaweed).